We begin with the raw amino-acid sequence, 1358 residues long: Xanthine dehydrogenase/oxidase (1358 aa).

The region spanning 8–95 (DELVFFVNGK…HVAVTTVEGI (88 aa)) is the 2Fe-2S ferredoxin-type domain. [2Fe-2S] cluster contacts are provided by C47, C52, C55, C77, C117, C120, C152, and C154. Residues 255–440 (FKGERVMWIQ…LSVEIPYSKE (186 aa)) form the FAD-binding PCMH-type domain. FAD-binding positions include 283-290 (LVVGNTEV), F363, 373-377 (ALGGN), D386, L430, and K448. Residues Q796 and F827 each contribute to the Mo-molybdopterin site. 2 residues coordinate substrate: E831 and R909. Residue R941 coordinates Mo-molybdopterin. Positions 943 and 1039 each coordinate substrate. A1108 provides a ligand contact to Mo-molybdopterin. E1290 (proton acceptor) is an active-site residue.

This sequence belongs to the xanthine dehydrogenase family. In terms of assembly, homodimer. FAD serves as cofactor. Mo-molybdopterin is required as a cofactor. It depends on [2Fe-2S] cluster as a cofactor. In terms of tissue distribution, detected in liver (at protein level).

It is found in the peroxisome. The protein localises to the cytoplasm. The catalysed reaction is xanthine + NAD(+) + H2O = urate + NADH + H(+). The enzyme catalyses hypoxanthine + NAD(+) + H2O = xanthine + NADH + H(+). It carries out the reaction xanthine + O2 + H2O = urate + H2O2. Key enzyme in purine degradation. Catalyzes the oxidation of hypoxanthine to xanthine. Catalyzes the oxidation of xanthine to uric acid. Contributes to the generation of reactive oxygen species. The protein is Xanthine dehydrogenase/oxidase (XDH) of Gallus gallus (Chicken).